A 154-amino-acid polypeptide reads, in one-letter code: MEHVPGSFGTSASFALRFGQTIFSAASLIFMCFDFDFYDFTTFCYLAMVMAIVTPWSILLALTDTYSVLVKLLPQELRVLSIVFAGDFVLSFLSLGGACAVASATELLASADGKICDGSLCIQYQVSAALAFLCWFLLLASALFNFWSLPSLYY.

At 1-17 the chain is on the cytoplasmic side; that stretch reads MEHVPGSFGTSASFALR. The chain crosses the membrane as a helical span at residues 18 to 38; that stretch reads FGQTIFSAASLIFMCFDFDFY. Residues 39–41 lie on the Extracellular side of the membrane; sequence DFT. Residues 42-62 form a helical membrane-spanning segment; sequence TFCYLAMVMAIVTPWSILLAL. Topologically, residues 63 to 81 are cytoplasmic; it reads TDTYSVLVKLLPQELRVLS. A helical membrane pass occupies residues 82-102; sequence IVFAGDFVLSFLSLGGACAVA. The Extracellular segment spans residues 103-128; it reads SATELLASADGKICDGSLCIQYQVSA. A helical membrane pass occupies residues 129–149; the sequence is ALAFLCWFLLLASALFNFWSL. Over 150–154 the chain is Cytoplasmic; it reads PSLYY.

Belongs to the Casparian strip membrane proteins (CASP) family. As to quaternary structure, homodimer and heterodimers.

The protein resides in the cell membrane. This Arabidopsis thaliana (Mouse-ear cress) protein is CASP-like protein 5C2.